Here is a 311-residue protein sequence, read N- to C-terminus: Aspartate carbamoyltransferase catalytic subunit (311 aa).

Carbamoyl phosphate-binding residues include Arg55 and Thr56. Lys84 contacts L-aspartate. Residues Arg105, His133, and Gln136 each coordinate carbamoyl phosphate. 2 residues coordinate L-aspartate: Arg166 and Arg229. The carbamoyl phosphate site is built by Leu268 and Pro269.

It belongs to the aspartate/ornithine carbamoyltransferase superfamily. ATCase family. In terms of assembly, heterododecamer (2C3:3R2) of six catalytic PyrB chains organized as two trimers (C3), and six regulatory PyrI chains organized as three dimers (R2).

The catalysed reaction is carbamoyl phosphate + L-aspartate = N-carbamoyl-L-aspartate + phosphate + H(+). Its pathway is pyrimidine metabolism; UMP biosynthesis via de novo pathway; (S)-dihydroorotate from bicarbonate: step 2/3. Functionally, catalyzes the condensation of carbamoyl phosphate and aspartate to form carbamoyl aspartate and inorganic phosphate, the committed step in the de novo pyrimidine nucleotide biosynthesis pathway. The sequence is that of Aspartate carbamoyltransferase catalytic subunit from Alkaliphilus metalliredigens (strain QYMF).